The chain runs to 468 residues: Interleukin-9 receptor (468 aa).

A signal peptide spans 1 to 37 (MALGRCIAEGWTLERVAVKQVSWFLIYSWVCSGVCRG). Over 38–270 (VSVPEQGGGG…GLLVPRWQWS (233 aa)) the chain is Extracellular. Asparagine 116 and asparagine 155 each carry an N-linked (GlcNAc...) asparagine glycan. Positions 148–256 (PPSDLQSNVS…WSQPVSFPSP (109 aa)) constitute a Fibronectin type-III domain. The short motif at 244–248 (WSEWS) is the WSXWS motif element. A helical transmembrane segment spans residues 271 to 291 (ASILVVVPIFLLLTGFVHLLF). The Cytoplasmic portion of the chain corresponds to 292–468 (KLSPRLKRIF…PVALPVSSRA (177 aa)). A Box 1 motif motif is present at residues 301–309 (FYQNIPSPE). The segment at 407–426 (PQEDWAPLGSARPPPPDSDS) is disordered.

It belongs to the type I cytokine receptor family. Type 4 subfamily. As to quaternary structure, interacts with IL9.

The protein resides in the cell membrane. The protein localises to the secreted. Its function is as follows. Plays an important role in the immune response against parasites by acting as a receptor of IL9. The chain is Interleukin-9 receptor (Il9r) from Mus musculus (Mouse).